The primary structure comprises 469 residues: Desmin (469 aa).

The head stretch occupies residues 2–107; it reads SQAYSSSQRV…QEFLTTRTNE (106 aa). A Phosphoserine; by CDK1 modification is found at serine 7. Serine 12 carries the post-translational modification Phosphoserine; by AURKB. Arginine 16 is subject to Omega-N-methylarginine. Residue threonine 17 is modified to Phosphothreonine; by AURKB and ROCK1. Phosphoserine; by CDK1 occurs at positions 28 and 32. Arginine 37 carries the asymmetric dimethylarginine; alternate modification. At arginine 37 the chain carries Omega-N-methylarginine; alternate. Position 45 is a phosphoserine (serine 45). Arginine 58 carries the ADP-ribosylarginine modification. Position 60 is a phosphoserine; by AURKB (serine 60). Omega-N-methylarginine is present on arginine 70. Phosphothreonine; by ROCK1 is present on threonine 76. Serine 81 carries the post-translational modification Phosphoserine. Residues 107-415 form the IF rod domain; it reads EKVELQELND…KLLEGEESRI (309 aa). Positions 108 to 140 are coil 1A; the sequence is KVELQELNDRFANYIEKVRFLEQQNAALAAEVN. Positions 141 to 150 are linker 1; that stretch reads RLKGREPTRV. The interval 151 to 251 is coil 1B; sequence AEIYEEELRE…HEEEIRELQA (101 aa). The linker 12 stretch occupies residues 252-267; it reads QLQEQQVQVEMDMSKP. Residues 267–414 form an interaction with NEB region; sequence PDLTAALRDI…RKLLEGEESR (148 aa). Residues 268–286 form a coil 2A region; sequence DLTAALRDIRAQYETIAAK. The linker 2 stretch occupies residues 287–294; sequence NISEAEEW. Phosphoserine occurs at positions 289, 357, 360, and 423. The interval 295–411 is coil 2B; the sequence is YKSKVSDLTQ…ATYRKLLEGE (117 aa). Residues 412–469 form a tail region; the sequence is ESRINLPIQTYSALNFRETSPEQRGSEVHTKKTVMIKTIETRDGEVVSEATQQQHEVL. Positions 437–452 are interaction with CRYAB; it reads SEVHTKKTVMIKTIET.

Belongs to the intermediate filament family. In terms of assembly, homomer. Interacts with DST. Interacts with MTM1. Interacts with EPPK1; interaction is dependent of higher-order structure of intermediate filament. Interacts with CRYAB. Interacts with NEB (via nebulin repeats 160-164). Interacts (via rod region) with NEBL (via nebulin repeats 1-5). Interacts with ASB2; the interaction targets DES for proteasomal degradation. Interacts with PKP1. Interacts with FLII. Post-translationally, ADP-ribosylation prevents ability to form intermediate filaments. Phosphorylation at Ser-7, Ser-28 and Ser-32 by CDK1, phosphorylation at Ser-60 by AURKB and phosphorylation at Thr-76 by ROCK1 contribute to efficient separation of desmin intermediate filaments during mitosis. In terms of processing, ubiquitination by a SCF-like complex containing ASB2 leads to proteasomal degradation.

It is found in the cytoplasm. The protein localises to the myofibril. The protein resides in the sarcomere. It localises to the z line. Its subcellular location is the cell membrane. It is found in the sarcolemma. The protein localises to the nucleus. The protein resides in the cell tip. It localises to the nucleus envelope. Its function is as follows. Muscle-specific type III intermediate filament essential for proper muscular structure and function. Plays a crucial role in maintaining the structure of sarcomeres, inter-connecting the Z-disks and forming the myofibrils, linking them not only to the sarcolemmal cytoskeleton, but also to the nucleus and mitochondria, thus providing strength for the muscle fiber during activity. In adult striated muscle they form a fibrous network connecting myofibrils to each other and to the plasma membrane from the periphery of the Z-line structures. May act as a sarcomeric microtubule-anchoring protein: specifically associates with detyrosinated tubulin-alpha chains, leading to buckled microtubules and mechanical resistance to contraction. Required for nuclear membrane integrity, via anchoring at the cell tip and nuclear envelope, resulting in maintenance of microtubule-derived intracellular mechanical forces. Contributes to the transcriptional regulation of the NKX2-5 gene in cardiac progenitor cells during a short period of cardiomyogenesis and in cardiac side population stem cells in the adult. Plays a role in maintaining an optimal conformation of nebulette (NEB) on heart muscle sarcomeres to bind and recruit cardiac alpha-actin. This chain is Desmin (DES), found in Canis lupus familiaris (Dog).